The chain runs to 262 residues: MIDETAYIHPSAIVEDGAVIGANVRIGPFCCIGSQVEIGEGTELKSHVVVNGITKIGRDNQIFQFASIGEMNQDLKYHGEPTRVEIGDRNRIRESVTIHRGTVQGGGVTKIGNDNLLMVNAHIAHDCIVGDRCVIANNGTLGGHVILGDYVIIGGMSAIHQFCQIGSHAMVGGCSGVVQDIPPYVIAQGNHATPFGTNVEGLKRRGFDKDSLNVIRNAYKILYRNGKTLEEAQQEIAELAENNQHVKIFSDFLANSTRGIVR.

It belongs to the transferase hexapeptide repeat family. LpxA subfamily. Homotrimer.

It localises to the cytoplasm. It catalyses the reaction a (3R)-hydroxyacyl-[ACP] + UDP-N-acetyl-alpha-D-glucosamine = a UDP-3-O-[(3R)-3-hydroxyacyl]-N-acetyl-alpha-D-glucosamine + holo-[ACP]. The protein operates within glycolipid biosynthesis; lipid IV(A) biosynthesis; lipid IV(A) from (3R)-3-hydroxytetradecanoyl-[acyl-carrier-protein] and UDP-N-acetyl-alpha-D-glucosamine: step 1/6. Functionally, involved in the biosynthesis of lipid A, a phosphorylated glycolipid that anchors the lipopolysaccharide to the outer membrane of the cell. This chain is Acyl-[acyl-carrier-protein]--UDP-N-acetylglucosamine O-acyltransferase, found in Photorhabdus laumondii subsp. laumondii (strain DSM 15139 / CIP 105565 / TT01) (Photorhabdus luminescens subsp. laumondii).